A 223-amino-acid chain; its full sequence is MKKIQIALDGPAGAGKSTIAKQLASHLDYVYIDTGAMYRAVTLAALEQGLDLENGPVLGELMKSLDIRLTPGEQGQRVFIGEREVTDAIRTNEVTNNVSFVARQAEVRSALVIAQRKLAERGGIVMDGRDIGTVVLPEAELKVFLTASVEERASRRHRENIARGMDSDLKGLQDEIALRDKRDSERTVSPLKQADDAIYLDTTELNIDQVVARLTELAEGALK.

10 to 18 (GPAGAGKST) lines the ATP pocket.

It belongs to the cytidylate kinase family. Type 1 subfamily.

It is found in the cytoplasm. The enzyme catalyses CMP + ATP = CDP + ADP. It carries out the reaction dCMP + ATP = dCDP + ADP. The protein is Cytidylate kinase of Exiguobacterium sibiricum (strain DSM 17290 / CCUG 55495 / CIP 109462 / JCM 13490 / 255-15).